Here is a 438-residue protein sequence, read N- to C-terminus: C4-dicarboxylate transport protein 1 (438 aa).

A run of 8 helical transmembrane segments spans residues 20-42, 57-77, 90-112, 160-179, 192-214, 229-251, 324-346, and 361-383; these read LYVQ…PSVA, LIKM…IAHI, ALFY…GNLV, VLQV…ALGK, AHAV…FGAM, LIGL…LGLI, LFIA…LLVA, and FITL…AIVF.

Belongs to the dicarboxylate/amino acid:cation symporter (DAACS) (TC 2.A.23) family.

The protein localises to the cell inner membrane. Its function is as follows. Responsible for the transport of dicarboxylates such as succinate, fumarate, and malate from the periplasm across the membrane. The sequence is that of C4-dicarboxylate transport protein 1 from Bradyrhizobium diazoefficiens (strain JCM 10833 / BCRC 13528 / IAM 13628 / NBRC 14792 / USDA 110).